The following is a 120-amino-acid chain: Large ribosomal subunit protein bL19 (120 aa).

This sequence belongs to the bacterial ribosomal protein bL19 family.

In terms of biological role, this protein is located at the 30S-50S ribosomal subunit interface and may play a role in the structure and function of the aminoacyl-tRNA binding site. The polypeptide is Large ribosomal subunit protein bL19 (Thermodesulfovibrio yellowstonii (strain ATCC 51303 / DSM 11347 / YP87)).